The following is a 357-amino-acid chain: Protein RecA (357 aa).

71–78 (GPESSGKT) is an ATP binding site.

The protein belongs to the RecA family.

The protein localises to the cytoplasm. Can catalyze the hydrolysis of ATP in the presence of single-stranded DNA, the ATP-dependent uptake of single-stranded DNA by duplex DNA, and the ATP-dependent hybridization of homologous single-stranded DNAs. It interacts with LexA causing its activation and leading to its autocatalytic cleavage. This is Protein RecA from Ehrlichia canis (strain Jake).